We begin with the raw amino-acid sequence, 364 residues long: Probable UDP-arabinopyranose mutase 4 (364 aa).

A DXD motif motif is present at residues 106-108 (DDD). N-linked (Glc...) arginine glycosylation is present at R154.

Belongs to the RGP family. In terms of assembly, heteromers with RGP1 and RGP2. The cofactor is Mn(2+). Mg(2+) is required as a cofactor. Reversibly glycosylated in vitro by UDP-glucose, UDP-xylose and UDP-galactose, but not UDP-mannose. In terms of tissue distribution, specifically expressed in developing seeds.

The protein resides in the cytoplasm. Its subcellular location is the cytosol. It is found in the golgi apparatus. It carries out the reaction UDP-beta-L-arabinofuranose = UDP-beta-L-arabinopyranose. Its function is as follows. Probable UDP-L-arabinose mutase involved in the biosynthesis of cell wall non-cellulosic polysaccharides. The chain is Probable UDP-arabinopyranose mutase 4 from Arabidopsis thaliana (Mouse-ear cress).